The sequence spans 1070 residues: Phosphatidylinositol 4,5-bisphosphate 3-kinase catalytic subunit beta isoform (1070 aa).

The 90-residue stretch at 26-115 folds into the PI3K-ABD domain; the sequence is SDGSIPVDFL…LPVLKLVTRS (90 aa). Positions 194–285 constitute a PI3K-RBD domain; the sequence is GGKLIVAVHF…RALPHFILVE (92 aa). Ser324 carries the phosphoserine modification. The C2 PI3K-type domain maps to 327–496; it reads WENNNPFQIV…NATALHVKFP (170 aa). The Nuclear localization signal signature appears at 410–418; it reads KVKTKKSTK. In terms of domain architecture, PIK helical spans 524–701; it reads ANVSSRGGKK…GVILEAYCRG (178 aa). Positions 772-1053 constitute a PI3K/PI4K catalytic domain; the sequence is YVEKCKYMDS…KFDEALRESW (282 aa). Residues 778–784 are G-loop; it reads YMDSKMK. The catalytic loop stretch occupies residues 916–924; it reads GIGDRHSDN. An activation loop region spans residues 935–961; sequence HIDFGHILGNFKSKFGIKRERVPFILT. Position 1070 is a phosphoserine; by autocatalysis (Ser1070).

The protein belongs to the PI3/PI4-kinase family. In terms of assembly, heterodimer of a catalytic subunit PIK3CB and a p85 regulatory subunit (PIK3R1, PIK3R2 or PIK3R3). Interaction with PIK3R2 is required for nuclear localization and nuclear export. Part of a complex with PIK3R1 and PTEN. Binding to PTEN may antagonize the lipid kinase activity under normal growth conditions. Part of a complex involved in autophagosome formation composed of PIK3C3 and PIK3R4. Interacts with BECN1, ATG14 and RAB5A. In terms of processing, autophosphorylation at Ser-1070 negatively regulates the phosphatidylinositol-4,5-bisphosphate 3-kinase activity. In terms of tissue distribution, expressed ubiquitously.

Its subcellular location is the cytoplasm. The protein resides in the nucleus. The catalysed reaction is a 1,2-diacyl-sn-glycero-3-phospho-(1D-myo-inositol-4,5-bisphosphate) + ATP = a 1,2-diacyl-sn-glycero-3-phospho-(1D-myo-inositol-3,4,5-trisphosphate) + ADP + H(+). It catalyses the reaction 1-octadecanoyl-2-(5Z,8Z,11Z,14Z)-eicosatetraenoyl-sn-glycero-3-phospho-1D-myo-inositol 4,5-bisphosphate + ATP = 1-octadecanoyl-2-(5Z,8Z,11Z,14Z-eicosatetraenoyl)-sn-glycero-3-phospho-(1D-myo-inositol 3,4,5-triphosphate) + ADP + H(+). The enzyme catalyses L-seryl-[protein] + ATP = O-phospho-L-seryl-[protein] + ADP + H(+). Its pathway is phospholipid metabolism; phosphatidylinositol phosphate biosynthesis. Its function is as follows. Phosphoinositide-3-kinase (PI3K) phosphorylates phosphatidylinositol derivatives at position 3 of the inositol ring to produce 3-phosphoinositides. Uses ATP and PtdIns(4,5)P2 (phosphatidylinositol 4,5-bisphosphate) to generate phosphatidylinositol 3,4,5-trisphosphate (PIP3). PIP3 plays a key role by recruiting PH domain-containing proteins to the membrane, including AKT1 and PDPK1, activating signaling cascades involved in cell growth, survival, proliferation, motility and morphology. Involved in the activation of AKT1 upon stimulation by G-protein coupled receptors (GPCRs) ligands such as CXCL12, sphingosine 1-phosphate, and lysophosphatidic acid. May also act downstream receptor tyrosine kinases. Required in different signaling pathways for stable platelet adhesion and aggregation. Plays a role in platelet activation signaling triggered by GPCRs, alpha-IIb/beta-3 integrins (ITGA2B/ ITGB3) and ITAM (immunoreceptor tyrosine-based activation motif)-bearing receptors such as GP6. Regulates the strength of adhesion of ITGA2B/ ITGB3 activated receptors necessary for the cellular transmission of contractile forces. Required for platelet aggregation induced by F2 (thrombin) and thromboxane A2 (TXA2). Has a role in cell survival. May have a role in cell migration. Involved in the early stage of autophagosome formation. Modulates the intracellular level of PtdIns3P (phosphatidylinositol 3-phosphate) and activates PIK3C3 kinase activity. May act as a scaffold, independently of its lipid kinase activity to positively regulate autophagy. May have a role in insulin signaling as scaffolding protein in which the lipid kinase activity is not required. May have a kinase-independent function in regulating cell proliferation and in clathrin-mediated endocytosis. Mediator of oncogenic signal in cell lines lacking PTEN. The lipid kinase activity is necessary for its role in oncogenic transformation. Required for the growth of ERBB2 and RAS driven tumors. Also has a protein kinase activity showing autophosphorylation. The chain is Phosphatidylinositol 4,5-bisphosphate 3-kinase catalytic subunit beta isoform (PIK3CB) from Homo sapiens (Human).